The sequence spans 145 residues: Hemoglobin subunit beta (145 aa).

The region spanning 1–145 (MLTAEEKAAV…VANALAHRYH (145 aa)) is the Globin domain. A Phosphothreonine modification is found at Thr-11. At Ser-43 the chain carries Phosphoserine. The residue at position 58 (Lys-58) is an N6-acetyllysine. His-62 is a binding site for heme b. An N6-acetyllysine modification is found at Lys-81. His-91 is a binding site for heme b. At Cys-92 the chain carries S-nitrosocysteine.

It belongs to the globin family. As to quaternary structure, heterotetramer of two alpha chains and two beta chains. Red blood cells.

Involved in oxygen transport from the lung to the various peripheral tissues. In Bos mutus grunniens (Wild yak), this protein is Hemoglobin subunit beta (HBB).